The chain runs to 311 residues: Coproporphyrin III ferrochelatase 1 (311 aa).

Fe-coproporphyrin III is bound by residues Y12, R29, R45 to Y46, S53, and Y124. Residues H182 and E263 each contribute to the Fe(2+) site.

The protein belongs to the ferrochelatase family.

The protein resides in the cytoplasm. It catalyses the reaction Fe-coproporphyrin III + 2 H(+) = coproporphyrin III + Fe(2+). The protein operates within porphyrin-containing compound metabolism; protoheme biosynthesis. Functionally, involved in coproporphyrin-dependent heme b biosynthesis. Catalyzes the insertion of ferrous iron into coproporphyrin III to form Fe-coproporphyrin III. The sequence is that of Coproporphyrin III ferrochelatase 1 from Bacillus cereus (strain ATCC 10987 / NRS 248).